We begin with the raw amino-acid sequence, 297 residues long: Cell division protein ZipA (297 aa).

Residue M1 is a topological domain, periplasmic. The helical transmembrane segment at 2-22 threads the bilayer; the sequence is EIGLREWLILIGIIVIAGILF. Topologically, residues 23-297 are cytoplasmic; that stretch reads DGWRRMRGGK…FERRALTQKR (275 aa). The disordered stretch occupies residues 48 to 150; it reads DEEGGSAEVL…GAAPASSSVK (103 aa). Positions 83 to 92 are enriched in basic and acidic residues; it reads ARDREREPKP. Acidic residues predominate over residues 124–133; it reads LFADSDDDFA. The span at 136 to 149 shows a compositional bias: polar residues; the sequence is NNRSSGAAPASSSV.

The protein belongs to the ZipA family. Interacts with FtsZ via their C-terminal domains.

It is found in the cell inner membrane. Functionally, essential cell division protein that stabilizes the FtsZ protofilaments by cross-linking them and that serves as a cytoplasmic membrane anchor for the Z ring. Also required for the recruitment to the septal ring of downstream cell division proteins. The chain is Cell division protein ZipA from Pseudomonas putida (strain ATCC 700007 / DSM 6899 / JCM 31910 / BCRC 17059 / LMG 24140 / F1).